Here is a 130-residue protein sequence, read N- to C-terminus: Small ribosomal subunit protein uS8 (130 aa).

The protein belongs to the universal ribosomal protein uS8 family.

In Agaricus bisporus (White button mushroom), this protein is Small ribosomal subunit protein uS8 (rps22).